Consider the following 193-residue polypeptide: DNA damage-inducible transcript 4-like protein (193 aa).

The protein belongs to the DDIT4 family. In terms of tissue distribution, expressed in heart, skeletal muscle and testis.

The protein resides in the cytoplasm. Its function is as follows. Inhibits cell growth by regulating the TOR signaling pathway upstream of the TSC1-TSC2 complex and downstream of AKT1. In Rattus norvegicus (Rat), this protein is DNA damage-inducible transcript 4-like protein (Ddit4l).